The primary structure comprises 682 residues: Putative protein RhsE (682 aa).

Positions 348–360 (ENGEREKAQRRSL) are enriched in basic and acidic residues. A disordered region spans residues 348–372 (ENGEREKAQRRSLAETLQQEGSENG).

It belongs to the RHS family.

In terms of biological role, rhs elements have a nonessential function. They may play an important role in the natural ecology of the cell. The polypeptide is Putative protein RhsE (rhsE) (Escherichia coli (strain K12)).